We begin with the raw amino-acid sequence, 643 residues long: Threonine--tRNA ligase (643 aa).

The TGS domain maps to 1-61 (MPTIKFIDGT…TNDSIVKFVY (61 aa)). The catalytic stretch occupies residues 244-535 (DHRKISKILD…LIEEYIGNFP (292 aa)). Cysteine 335, histidine 386, and histidine 512 together coordinate Zn(2+).

The protein belongs to the class-II aminoacyl-tRNA synthetase family. As to quaternary structure, homodimer. The cofactor is Zn(2+).

The protein resides in the cytoplasm. It carries out the reaction tRNA(Thr) + L-threonine + ATP = L-threonyl-tRNA(Thr) + AMP + diphosphate + H(+). In terms of biological role, catalyzes the attachment of threonine to tRNA(Thr) in a two-step reaction: L-threonine is first activated by ATP to form Thr-AMP and then transferred to the acceptor end of tRNA(Thr). Also edits incorrectly charged L-seryl-tRNA(Thr). This is Threonine--tRNA ligase from Buchnera aphidicola subsp. Baizongia pistaciae (strain Bp).